Reading from the N-terminus, the 218-residue chain is MTQDELKKAVGWAALKYVRLGTIVGVGTGSTAAHFIDALASVRHQIDGAVSSSEASSAKLQSLGIPLFDLNEVDSLDIYVDGADEINGSMQMIKGGGAALTREKIIAAVARKFICIADSSKLVDVLGTFPLPVEVIPMARAWVARELVRLGGAPVYRQGVVTDNGNIILDVHNLAIMDAVALEEQINNIPGVVTVGLFARRGADVALIGSEQGVKIIG.

Substrate is bound by residues 28–31 (TGST), 81–84 (DGAD), and 94–97 (KGGG). The Proton acceptor role is filled by Glu-103. A substrate-binding site is contributed by Lys-121.

It belongs to the ribose 5-phosphate isomerase family. Homodimer.

It catalyses the reaction aldehydo-D-ribose 5-phosphate = D-ribulose 5-phosphate. It functions in the pathway carbohydrate degradation; pentose phosphate pathway; D-ribose 5-phosphate from D-ribulose 5-phosphate (non-oxidative stage): step 1/1. In terms of biological role, catalyzes the reversible conversion of ribose-5-phosphate to ribulose 5-phosphate. In Sodalis glossinidius (strain morsitans), this protein is Ribose-5-phosphate isomerase A.